The sequence spans 54 residues: Secreted virulence factor MC69 (54 aa).

Residues 1-18 form the signal peptide; that stretch reads MKFTLALLTTLCASLASA. The cysteines at positions 38 and 48 are disulfide-linked.

The protein belongs to the MC69 virulence factor family.

Its subcellular location is the secreted. Secreted protein required for appressorial penetration of intact host epidermal cells and for pathogenicity. The chain is Secreted virulence factor MC69 from Colletotrichum orbiculare (strain 104-T / ATCC 96160 / CBS 514.97 / LARS 414 / MAFF 240422) (Cucumber anthracnose fungus).